Reading from the N-terminus, the 185-residue chain is ATP-dependent protease subunit HslV (185 aa).

Residue T12 is part of the active site. Na(+)-binding residues include A168, C171, and T174.

The protein belongs to the peptidase T1B family. HslV subfamily. As to quaternary structure, a double ring-shaped homohexamer of HslV is capped on each side by a ring-shaped HslU homohexamer. The assembly of the HslU/HslV complex is dependent on binding of ATP.

It is found in the cytoplasm. The catalysed reaction is ATP-dependent cleavage of peptide bonds with broad specificity.. With respect to regulation, allosterically activated by HslU binding. Functionally, protease subunit of a proteasome-like degradation complex believed to be a general protein degrading machinery. The chain is ATP-dependent protease subunit HslV from Dinoroseobacter shibae (strain DSM 16493 / NCIMB 14021 / DFL 12).